The sequence spans 1033 residues: Tyrosine-protein kinase-like otk (1033 aa).

The signal sequence occupies residues methionine 1–alanine 22. At serine 23–alanine 581 the chain is on the extracellular side. Ig-like C2-type domains are found at residues serine 25 to serine 114, leucine 113 to serine 199, proline 251 to asparagine 365, proline 368 to asparagine 463, and proline 468 to valine 558. N-linked (GlcNAc...) asparagine glycosylation is present at asparagine 39. 4 cysteine pairs are disulfide-bonded: cysteine 46-cysteine 95, cysteine 137-cysteine 188, cysteine 276-cysteine 354, and cysteine 399-cysteine 447. N-linked (GlcNAc...) asparagine glycans are attached at residues asparagine 336, asparagine 417, asparagine 429, asparagine 444, asparagine 457, asparagine 512, and asparagine 524. Cysteine 490 and cysteine 542 are disulfide-bonded. Residues valine 582 to tryptophan 602 traverse the membrane as a helical segment. The Cytoplasmic segment spans residues cysteine 603–lysine 1033. Disordered stretches follow at residues leucine 617–alanine 679 and serine 718–methionine 760. Residues lysine 655 to arginine 673 are compositionally biased toward polar residues. Phosphoserine is present on serine 678. Residues leucine 692 to methionine 1028 enclose the Protein kinase; inactive domain. Residues serine 720–serine 731 show a composition bias toward basic and acidic residues.

The protein belongs to the protein kinase superfamily. Tyr protein kinase family. Insulin receptor subfamily. As to quaternary structure, interacts with plexA; component of a receptor complex that mediates the repulsive signaling in response to Semaphorin ligands. In terms of tissue distribution, dynamically expressed during embryogenesis in several areas of the developing nervous system, including neurons and fasciculating axons. Expression in stage 7 embryos is seen in the anterior midgut primordia, cephalic furrow and along the germinal band. At stage 11, expression is in 15 stripes over the trunk region, and in the anterior and posterior midgut primordia. Stage 12 shows expression in the developing nervous system, procephalic lobe and maxillar bud. Stage 13 shows expression in the ventral cord, maxillar segment and in three regions of the gut. At stage 16 expression is preferentially detected throughout the nervous system, including the neuromers in the ventral cord and the supraesophageal ganglion (at protein level). In larva, expression is seen in developing R cells and is localized predominantly to R1-R6 growth cones.

It localises to the cell membrane. Functionally, acts as a calcium-dependent, homophilic cell adhesion molecule that regulates neural recognition during the development of the nervous system. Component of the repulsive Plexin signaling response to regulate motor axon guidance at the embryonic stage. Also component of a receptor complex that is required in the adult visual system to innervate the lamina layer; specific targeting of R1-R6 axons. The polypeptide is Tyrosine-protein kinase-like otk (Drosophila melanogaster (Fruit fly)).